The sequence spans 539 residues: Eukaryotic translation initiation factor 3 subunit L (539 aa).

A PCI domain is found at 306–514 (TFSDILLYVQ…IHIADTKVSH (209 aa)).

It belongs to the eIF-3 subunit L family. As to quaternary structure, component of the eukaryotic translation initiation factor 3 (eIF-3) complex. The eIF-3 complex interacts with pix.

It is found in the cytoplasm. Component of the eukaryotic translation initiation factor 3 (eIF-3) complex, which is involved in protein synthesis of a specialized repertoire of mRNAs and, together with other initiation factors, stimulates binding of mRNA and methionyl-tRNAi to the 40S ribosome. The eIF-3 complex specifically targets and initiates translation of a subset of mRNAs involved in cell proliferation. The polypeptide is Eukaryotic translation initiation factor 3 subunit L (Drosophila willistoni (Fruit fly)).